The primary structure comprises 422 residues: D-amino acid dehydrogenase (422 aa).

Val-3–Trp-17 lines the FAD pocket.

It belongs to the DadA oxidoreductase family. The cofactor is FAD.

It carries out the reaction a D-alpha-amino acid + A + H2O = a 2-oxocarboxylate + AH2 + NH4(+). It participates in amino-acid degradation; D-alanine degradation; NH(3) and pyruvate from D-alanine: step 1/1. Oxidative deamination of D-amino acids. The protein is D-amino acid dehydrogenase of Paramagnetospirillum magneticum (strain ATCC 700264 / AMB-1) (Magnetospirillum magneticum).